Here is a 156-residue protein sequence, read N- to C-terminus: Ribosomal RNA large subunit methyltransferase H (156 aa).

S-adenosyl-L-methionine is bound by residues Leu72, Gly104, and 123–128; that span reads FGAMVW.

This sequence belongs to the RNA methyltransferase RlmH family. Homodimer.

It is found in the cytoplasm. The enzyme catalyses pseudouridine(1915) in 23S rRNA + S-adenosyl-L-methionine = N(3)-methylpseudouridine(1915) in 23S rRNA + S-adenosyl-L-homocysteine + H(+). In terms of biological role, specifically methylates the pseudouridine at position 1915 (m3Psi1915) in 23S rRNA. This chain is Ribosomal RNA large subunit methyltransferase H, found in Dinoroseobacter shibae (strain DSM 16493 / NCIMB 14021 / DFL 12).